Here is a 449-residue protein sequence, read N- to C-terminus: MTTILKHLPVGQRIGIAFSGGLDTSAALLWMRQKGAVPYAYTANLGQPDEDDYDAIPRRAKEYGAENARLIDCRKQLVAEGIAAIQCGAFHNTTGGMTYFNTTPLGRAVTGTMLVAAMKEDGVNIWGDGSTYKGNDIERFYRYGLLTNAELKIYKPWLDTDFIDELGGRQEMSEFMTTSGFDYKMSAEKAYSTDSNMLGATHEAKDLEFLNSSVKIVNPIMGVKFWDENVRIPAEEVTVRFERGHPVALNGQTFSDDVELLLEANRIGGRHGLGMSDQIENRIIEAKSRGIYEAPGMALLHIAYERLVTGIHNEDTIEQYHAHGRQLGRLLYQGRWFDPQALMLRDALQRWVASEITGEVTLELRRGNDYSILNTVSDNLTYKPERLTMEKGESVFSPDDRIGQLTMRNLDITDTREKLFNYVESGLIFSGNAGLPQVANPSLQDKSAK.

ATP is bound by residues 17-25 (AFSGGLDTS) and Ala43. Tyr99 is a binding site for L-citrulline. 2 residues coordinate ATP: Gly129 and Thr131. The L-aspartate site is built by Thr131, Asn135, and Asp136. L-citrulline is bound at residue Asn135. Asp136 provides a ligand contact to ATP. L-citrulline-binding residues include Arg139 and Ser192. Residue Asp194 coordinates ATP. Positions 201, 203, and 280 each coordinate L-citrulline.

This sequence belongs to the argininosuccinate synthase family. Type 2 subfamily. Homotetramer.

Its subcellular location is the cytoplasm. It catalyses the reaction L-citrulline + L-aspartate + ATP = 2-(N(omega)-L-arginino)succinate + AMP + diphosphate + H(+). It participates in amino-acid biosynthesis; L-arginine biosynthesis; L-arginine from L-ornithine and carbamoyl phosphate: step 2/3. This Dickeya dadantii (strain 3937) (Erwinia chrysanthemi (strain 3937)) protein is Argininosuccinate synthase.